We begin with the raw amino-acid sequence, 256 residues long: MVALRLIPCLDVAHGRVVKGVNFVNLRDSGDPVELACRYSDEGADELVFLDIRASVENRNTLVDLVSRTAKSVKIPFTVGGGIDSVSSINDLLRAGADKVSLNSSAVRNPDLISKSSREFGNQCIVIAIDAKRKVNKTDEWEVYVKGGRENTGIDVLSWAKKVEELGAGEILLTSMDGDGTQNGYDLHLTESVANIVNIPVIASGGAGCLEDIYDVFNEGRASAALLASLLHDKKLSLREIKTFLLERKLPIRPYE.

Active-site residues include D11 and D130.

It belongs to the HisA/HisF family. As to quaternary structure, heterodimer of HisH and HisF.

The protein resides in the cytoplasm. The catalysed reaction is 5-[(5-phospho-1-deoxy-D-ribulos-1-ylimino)methylamino]-1-(5-phospho-beta-D-ribosyl)imidazole-4-carboxamide + L-glutamine = D-erythro-1-(imidazol-4-yl)glycerol 3-phosphate + 5-amino-1-(5-phospho-beta-D-ribosyl)imidazole-4-carboxamide + L-glutamate + H(+). It participates in amino-acid biosynthesis; L-histidine biosynthesis; L-histidine from 5-phospho-alpha-D-ribose 1-diphosphate: step 5/9. IGPS catalyzes the conversion of PRFAR and glutamine to IGP, AICAR and glutamate. The HisF subunit catalyzes the cyclization activity that produces IGP and AICAR from PRFAR using the ammonia provided by the HisH subunit. This chain is Imidazole glycerol phosphate synthase subunit HisF, found in Prochlorococcus marinus (strain MIT 9312).